The chain runs to 147 residues: SPI-1 type 3 secretion system pilotin (147 aa).

The signal sequence occupies residues 1-15 (MKKFYSCLPVFLLIG). C16 carries N-palmitoyl cysteine lipidation. The S-diacylglycerol cysteine moiety is linked to residue C16.

It belongs to the InvH family.

The protein resides in the cell outer membrane. In terms of biological role, involved in the synthesis of the type III secretion system (T3SS), also called injectisome, which is used to inject bacterial effector proteins into eukaryotic host cells. Pilot protein that is required for the proper localization of the secretin InvG/SctC in the outer membrane. Necessary for efficient adherence and entry of these organisms into cultured epithelial cells. The sequence is that of SPI-1 type 3 secretion system pilotin from Salmonella choleraesuis (strain SC-B67).